The chain runs to 174 residues: Regenerating islet-derived protein 3-gamma (174 aa).

The N-terminal stretch at 1 to 26 (MLPRVALTTMSWMLLSSLMLLSQVQG) is a signal peptide. The propeptide occupies 27–37 (EDAKEDVPTSR). Disulfide bonds link cysteine 40–cysteine 51, cysteine 68–cysteine 170, and cysteine 145–cysteine 162. The C-type lectin domain maps to 47-171 (YGSYCYALFS…CISELPYVCK (125 aa)). Positions 103–118 (WIGLHDPTLGQEPNRG) are sufficient to activate EXTL3. A Zn(2+)-binding site is contributed by histidine 107. The short motif at 114-116 (EPN) is the EPN element. The Zn(2+) site is built by glutamate 121 and histidine 144.

In terms of assembly, forms a hexameric membrane-permeabilizing oligomeric pore on membrane phospholipids. The hexamer is formed by three dimers related by helical symmetry. Forms filaments, filamentation traps pore complexes and limits damage to host cells. Interacts with EXTL3. Proteolytic processing by trypsin removes an inhibitory N-terminal propeptide and is essential for peptidoglycan binding and antibacterial activity. Expressed in injured skeletal muscles and sciatic nerve (at protein level). Expressed in the pancreas. Expression increases during the acute phase of pancreatitis.

It localises to the secreted. The protein resides in the cytoplasm. With respect to regulation, lipopolysaccharide inhibits pore-forming activity, explaining why is bactericidal for Gram-positive but not Gram-negative bacteria. Its function is as follows. Bactericidal C-type lectin which acts exclusively against Gram-positive bacteria and mediates bacterial killing by binding to surface-exposed carbohydrate moieties of peptidoglycan. Restricts bacterial colonization of the intestinal epithelial surface and consequently limits activation of adaptive immune responses by the microbiota. In terms of biological role, acts as a hormone in response to different stimuli like anti-inflammatory signals, such as IL17A, or gut microbiome. Is secreted by different cell types to activate its receptor EXTL3 and induce cell specific signaling pathways. Induced by IL17A in keratinocytes, regulates keratinocyte proliferation and differentiation after skin injury. In parallel, inhibits skin inflammation through the inhibition of inflammatory cytokines such as IL6 and TNF. Induced by IL22 in lung epithelial cells, inhibits cytokine production and regulates allergic airway inflammation. Induced in small intestine by inulin-enriched diet and Lactobacillus gasseri enriched microbiome, plays a role in the improvement of gut barrier function, the regulation of energy balance and glucose levels. Modulates microbiota composition in duodenal contents. Produced by nociceptor in response to endotoxins, prevents endotoxic death by targeting kynurenine pathway in microglia. Functionally, has bacteriostatic activity. Has bactericidal activity against L.monocytogenes and methicillin-resistant S.aureus. In Rattus norvegicus (Rat), this protein is Regenerating islet-derived protein 3-gamma.